The following is a 161-amino-acid chain: N5-carboxyaminoimidazole ribonucleotide mutase (161 aa).

S9, D12, and R39 together coordinate substrate.

It belongs to the AIR carboxylase family. Class I subfamily.

It carries out the reaction 5-carboxyamino-1-(5-phospho-D-ribosyl)imidazole + H(+) = 5-amino-1-(5-phospho-D-ribosyl)imidazole-4-carboxylate. It functions in the pathway purine metabolism; IMP biosynthesis via de novo pathway; 5-amino-1-(5-phospho-D-ribosyl)imidazole-4-carboxylate from 5-amino-1-(5-phospho-D-ribosyl)imidazole (N5-CAIR route): step 2/2. Catalyzes the conversion of N5-carboxyaminoimidazole ribonucleotide (N5-CAIR) to 4-carboxy-5-aminoimidazole ribonucleotide (CAIR). The polypeptide is N5-carboxyaminoimidazole ribonucleotide mutase (Vibrio vulnificus (strain CMCP6)).